The chain runs to 496 residues: Ganglioside-induced differentiation-associated protein 2 (496 aa).

2 disordered regions span residues 22–45 and 252–271; these read VRDG…GLHS and PERQ…DSEE. The Macro domain occupies 44 to 224; the sequence is HSPFPYRNDI…TYRRLLPLYF (181 aa). Residues 254–264 show a composition bias toward basic and acidic residues; it reads RQIRISEKPGG. Residues 329–483 enclose the CRAL-TRIO domain; the sequence is DLSDIAALKA…FVLDYDAREN (155 aa).

It belongs to the GDAP2 family.

The chain is Ganglioside-induced differentiation-associated protein 2 from Xenopus tropicalis (Western clawed frog).